The primary structure comprises 88 residues: ATP synthase subunit c 1 (88 aa).

2 helical membrane-spanning segments follow: residues 4–24 (FTWVIITAGFGMAFGSLGTAI) and 53–73 (IGLAMVESLAIYVFVVSMIIL).

It belongs to the ATPase C chain family. F-type ATPases have 2 components, F(1) - the catalytic core - and F(0) - the membrane proton channel. F(1) has five subunits: alpha(3), beta(3), gamma(1), delta(1), epsilon(1). F(0) has three main subunits: a(1), b(2) and c(10-14). The alpha and beta chains form an alternating ring which encloses part of the gamma chain. F(1) is attached to F(0) by a central stalk formed by the gamma and epsilon chains, while a peripheral stalk is formed by the delta and b chains.

Its subcellular location is the cell inner membrane. F(1)F(0) ATP synthase produces ATP from ADP in the presence of a proton or sodium gradient. F-type ATPases consist of two structural domains, F(1) containing the extramembraneous catalytic core and F(0) containing the membrane proton channel, linked together by a central stalk and a peripheral stalk. During catalysis, ATP synthesis in the catalytic domain of F(1) is coupled via a rotary mechanism of the central stalk subunits to proton translocation. In terms of biological role, key component of the F(0) channel; it plays a direct role in translocation across the membrane. A homomeric c-ring of between 10-14 subunits forms the central stalk rotor element with the F(1) delta and epsilon subunits. This Syntrophotalea carbinolica (strain DSM 2380 / NBRC 103641 / GraBd1) (Pelobacter carbinolicus) protein is ATP synthase subunit c 1.